Consider the following 1773-residue polypeptide: MRRGNISPAFWFLWLLLFGLLGPSSENTTAFTKGSDTTTASITGSETTMASTMASTSALTTGSKITTDSTTGSETTSASTMASTAAFTTGSETNTASTTDSGTTIASTRTFTTGSDTTTGSTAGSETIVASTTVSGTTTTFTIASTTVPETTMASSTTSTAGSEKTMASSIISETTMASTTGSETATVSTTGSETTTTSTASSEATKVSTTGSETTTASTAGSETTTTSTSMAGSEATTTSTADSKVITASSMSSETTVAPAAGSNTTTASTTGSETTTILIKASETTTASTAGSETTTPSPTGSQTTIVSISGSEITTTSTAGSENTTVSSAGSGTTTASMAGSETTVSTAGSETTTVSITGTETTMVSAMGSETTTNSTTSSETTVTSTAGSETTTVSTVGSETTTAYTADSETTAASTTGSEMTTVFTAGSETITPSTAGSETTTVSTAGSETTTVSTTGSETTTASTAHSETTAASTMGSETTKVSTAGSETTVSTAGSETTAASTEDSETNTAFTEDSKTTTASTTGFETTAASTTGSEPTMASTMGSETTMASTIGPETTKVSTASSEVTTVFAAGSETIRASTVGSETTTVSTTGSETTTASIMGSETSTDSTTGSETTTASTEGSETTTASTEGSEATTVSTTGSETTTVSITDSETTTTCTEGSEMTAVSTTVFETTTASTEGSEITIASTSDSETTTASTEGSETTTVTTAGSETKTAYTTGSETTTASNTGLETTTVFTIGSDTTTASTEGSETTAVSATGSEMTTVSTEGSENTTVSTTGSETTTVSTTGLETTTTSTEGSEMTTVSTTGAETTTDSTEGSGTTAASTAGSETTTVSTADSENTTASTADSETTSASTTGSETTTASTTSSETTTASTEGSETTTVSTTDSETTMVSTTGSERTITSTEGSETTTVSATGSETTVSTEGSGTTTVSITGSETTKVSTTGSETTTTSTEGSEITTASITGSETTTASTEGSETTTASTEGSETTSASTTGSETTTASTTSSETTMASIMGSETTMASTIGSETTKVSTASSKMTTVFTENSETTIASTTASETTTVSTAGSETIPASTAGSETTTTTSTEGSETTTASTEGSETTTASTESSETTTATTIGSETTTASTEGSETTTTSTEGSETTTASTEGSEITTVSTTGSETTTASTEGSETTTASTEGSELTTVSTTGSETITVSAEGSETTTVTTMGSETTTASTAGSETTTVSTAGSETTTASIEGSETTTVSSTGSETTTVSTTGTETTITSTEGSETTTVTTAGSETTAVYTTGSETTTTSTEGSETTTVSTTGSETTTASTADLETTTVSTSGSGTTTASTAGSETTTVYITGSKTTTASTEGSEATTVSTTSSETTTASTTGSEMTTVFTTVSETTTVSTIGSEATTSSAAGSEATTTSTEGSETTTASTAGSETTTASTAGSETTTASTSGSETNTACTTGSETSTPSSAGSETNTAFIIGSESTIASTASLEPTATSLTGSETTTVSITASGATAASTTVSSTTFVLTKATDVSIQPITNTPMSGTRTTGTRLTASSSVTMAPGMDFTASAASHTVPGIVLNTSGLGTSTMGASSTTSAHGVRTTTGSTREPTSSTFQETGPVSMGTNTVSMSHTPTNVIKPSGYLQPWAIILISLAAVVAAVGLSVGLSFCLRNLFFPLRYCGIYYPHGHSHSLGLDLNLGLGSGTFHSLGNALVHGGELEMGHGGTHGFGYGVGHGLSHIHGDGYGVNHGGHYGHGGGH.

Positions 1–26 are cleaved as a signal peptide; that stretch reads MRRGNISPAFWFLWLLLFGLLGPSSE. The Extracellular segment spans residues 27–1660; it reads NTTAFTKGSD…VIKPSGYLQP (1634 aa). 8 disordered regions span residues 61–102, 176–357, 372–405, 434–572, 590–674, 754–1026, 1064–1485, and 1603–1639; these read TGSK…TDSG, TMAS…SETT, MGSE…VGSE, SETI…STAS, TVGS…EGSE, DTTT…ETTM, TTIA…GSET, and MGAS…SMGT. Positions 153–1514 are 124 X 10 AA approximate repeats; sequence MASSTTSTAG…PTATSLTGSE (1362 aa). The segment covering 178–243 has biased composition (low complexity); it reads ASTTGSETAT…GSEATTTSTA (66 aa). The segment covering 248-258 has biased composition (polar residues); the sequence is ITASSMSSETT. The segment covering 262–357 has biased composition (low complexity); it reads AAGSNTTTAS…TVSTAGSETT (96 aa). 2 stretches are compositionally biased toward low complexity: residues 440-481 and 490-546; these read STAG…AAST and STAG…SEPT. Residues 547–572 show a composition bias toward polar residues; the sequence is MASTMGSETTMASTIGPETTKVSTAS. 2 stretches are compositionally biased toward low complexity: residues 755–1025 and 1064–1465; these read TTTA…SETT and TTIA…GSET. Polar residues-rich tracts occupy residues 1466 to 1485 and 1615 to 1639; these read NTAC…GSET and RTTT…SMGT. The helical transmembrane segment at 1661–1681 threads the bilayer; sequence WAIILISLAAVVAAVGLSVGL. Topologically, residues 1682–1773 are cytoplasmic; the sequence is SFCLRNLFFP…GGHYGHGGGH (92 aa).

Expressed in lung by serous cells of the submucosal gland (at protein level). Detected in the placenta, lung and testis.

The protein localises to the membrane. The chain is Mucin-22 (MUC22) from Homo sapiens (Human).